Here is a 556-residue protein sequence, read N- to C-terminus: Formate--tetrahydrofolate ligase 1 (556 aa).

65–72 provides a ligand contact to ATP; it reads TPAGEGKS.

Belongs to the formate--tetrahydrofolate ligase family.

It catalyses the reaction (6S)-5,6,7,8-tetrahydrofolate + formate + ATP = (6R)-10-formyltetrahydrofolate + ADP + phosphate. The protein operates within one-carbon metabolism; tetrahydrofolate interconversion. The sequence is that of Formate--tetrahydrofolate ligase 1 from Streptococcus pyogenes serotype M4 (strain MGAS10750).